The following is a 417-amino-acid chain: Methylthioribose-1-phosphate isomerase (417 aa).

Catalysis depends on aspartate 285, which acts as the Proton donor.

Belongs to the eIF-2B alpha/beta/delta subunits family. MtnA subfamily.

It localises to the cytoplasm. The protein resides in the nucleus. It catalyses the reaction 5-(methylsulfanyl)-alpha-D-ribose 1-phosphate = 5-(methylsulfanyl)-D-ribulose 1-phosphate. Its pathway is amino-acid biosynthesis; L-methionine biosynthesis via salvage pathway; L-methionine from S-methyl-5-thio-alpha-D-ribose 1-phosphate: step 1/6. In terms of biological role, catalyzes the interconversion of methylthioribose-1-phosphate (MTR-1-P) into methylthioribulose-1-phosphate (MTRu-1-P). The protein is Methylthioribose-1-phosphate isomerase of Lachancea thermotolerans (strain ATCC 56472 / CBS 6340 / NRRL Y-8284) (Yeast).